A 902-amino-acid polypeptide reads, in one-letter code: Viral-enhancing factor (902 aa).

In terms of domain architecture, Peptidase M60 spans 27-330; that stretch reads HRRTEVGVVL…IFAWLYNPQR (304 aa). Residues Asn73, Asn265, Asn278, Asn339, Asn540, Asn593, Asn594, Asn620, Asn782, and Asn840 are each glycosylated (N-linked (GlcNAc...) asparagine; by host).

Functionally, involved in disruption of the peritrophic membrane and fusion of nucleocapsids with midgut cells. The chain is Viral-enhancing factor (VEF) from Heliothis (HaGV).